A 39-amino-acid chain; its full sequence is Bacteriocin SRCAM 602 (39 aa).

This sequence belongs to the bacteriocin class IIA/YGNGV family.

The protein localises to the secreted. In terms of biological role, bacteriocin with antibacterial activity against C.jejuni. The protein is Bacteriocin SRCAM 602 of Paenibacillus polymyxa (Bacillus polymyxa).